Here is a 341-residue protein sequence, read N- to C-terminus: Probable galacturonosyltransferase-like 2 (341 aa).

The Cytoplasmic portion of the chain corresponds to 1 to 4 (MHSK). The helical; Signal-anchor for type II membrane protein transmembrane segment at 5-22 (FILYLSILAVFTVSFAGG) threads the bilayer. Residues 23–341 (ERFKEAPKFF…LESRFDLIES (319 aa)) lie on the Lumenal side of the membrane. Residue Asn-190 is glycosylated (N-linked (GlcNAc...) asparagine).

This sequence belongs to the glycosyltransferase 8 family.

It localises to the golgi apparatus membrane. The protein operates within glycan metabolism; pectin biosynthesis. Its function is as follows. May be involved in pectin and/or xylans biosynthesis in cell walls. This is Probable galacturonosyltransferase-like 2 (GATL2) from Arabidopsis thaliana (Mouse-ear cress).